Consider the following 476-residue polypeptide: Splicing factor ESS-2 homolog (476 aa).

Position 1 is an N-acetylmethionine (Met1). Low complexity predominate over residues 1–18 (METPGASASSLLLPAASR). Disordered regions lie at residues 1 to 36 (METP…SKQR) and 91 to 148 (LGKM…LPSL). Position 3 is a phosphothreonine (Thr3). Positions 133–142 (DGEAGEEEEK) are enriched in acidic residues. Lys142 is covalently cross-linked (Glycyl lysine isopeptide (Lys-Gly) (interchain with G-Cter in SUMO2)). The residue at position 292 (Ser292) is a Phosphoserine. Thr386 bears the Phosphothreonine mark. Ser391 and Ser395 each carry phosphoserine. A disordered region spans residues 413-465 (ALRASYTPSPARSTHLKTPASGLQTPTSTPAPGSATRTPLTQDPASITDNLLQ). Over residues 437-451 (TPTSTPAPGSATRTP) the composition is skewed to low complexity. A compositionally biased stretch (polar residues) spans 452-463 (LTQDPASITDNL).

The protein belongs to the ESS2 family. Identified in the spliceosome C complex. Interacts with FRA10AC1. As to expression, highly expressed in heart, brain and skeletal muscle. Detected at low levels in placenta.

The protein resides in the nucleus. Its function is as follows. May be involved in pre-mRNA splicing. The chain is Splicing factor ESS-2 homolog from Homo sapiens (Human).